Reading from the N-terminus, the 413-residue chain is Phosphopentomutase (413 aa).

Mn(2+)-binding residues include D11, D306, H311, D347, H348, and H359.

Belongs to the phosphopentomutase family. It depends on Mn(2+) as a cofactor.

The protein resides in the cytoplasm. It carries out the reaction 2-deoxy-alpha-D-ribose 1-phosphate = 2-deoxy-D-ribose 5-phosphate. It catalyses the reaction alpha-D-ribose 1-phosphate = D-ribose 5-phosphate. It participates in carbohydrate degradation; 2-deoxy-D-ribose 1-phosphate degradation; D-glyceraldehyde 3-phosphate and acetaldehyde from 2-deoxy-alpha-D-ribose 1-phosphate: step 1/2. Isomerase that catalyzes the conversion of deoxy-ribose 1-phosphate (dRib-1-P) and ribose 1-phosphate (Rib-1-P) to deoxy-ribose 5-phosphate (dRib-5-P) and ribose 5-phosphate (Rib-5-P), respectively. The polypeptide is Phosphopentomutase (Helicobacter pylori (strain P12)).